We begin with the raw amino-acid sequence, 73 residues long: Large ribosomal subunit protein eL20 (73 aa).

Belongs to the eukaryotic ribosomal protein eL20 family. In terms of assembly, part of the 50S ribosomal subunit. Binds 23S rRNA.

This is Large ribosomal subunit protein eL20 from Methanococcus aeolicus (strain ATCC BAA-1280 / DSM 17508 / OCM 812 / Nankai-3).